A 311-amino-acid chain; its full sequence is Malate dehydrogenase (311 aa).

NAD(+)-binding positions include 7–13 and Asp-34; that span reads GAAGGIG. Residues Arg-81 and Arg-87 each coordinate substrate. NAD(+) is bound by residues Asn-94 and 117 to 119; that span reads ITN. Residues Asn-119 and Arg-153 each coordinate substrate. The active-site Proton acceptor is His-177. Met-227 serves as a coordination point for NAD(+).

It belongs to the LDH/MDH superfamily. MDH type 1 family. In terms of assembly, homodimer.

The catalysed reaction is (S)-malate + NAD(+) = oxaloacetate + NADH + H(+). Catalyzes the reversible oxidation of malate to oxaloacetate. The protein is Malate dehydrogenase of Vibrio campbellii (strain ATCC BAA-1116).